The chain runs to 427 residues: Enolase (427 aa).

Gln163 contributes to the (2R)-2-phosphoglycerate binding site. The active-site Proton donor is Glu205. Asp242, Glu285, and Asp312 together coordinate Mg(2+). Residues Lys337, Arg366, Ser367, and Lys388 each coordinate (2R)-2-phosphoglycerate. Lys337 serves as the catalytic Proton acceptor.

This sequence belongs to the enolase family. It depends on Mg(2+) as a cofactor.

It localises to the cytoplasm. Its subcellular location is the secreted. The protein localises to the cell surface. The enzyme catalyses (2R)-2-phosphoglycerate = phosphoenolpyruvate + H2O. The protein operates within carbohydrate degradation; glycolysis; pyruvate from D-glyceraldehyde 3-phosphate: step 4/5. In terms of biological role, catalyzes the reversible conversion of 2-phosphoglycerate (2-PG) into phosphoenolpyruvate (PEP). It is essential for the degradation of carbohydrates via glycolysis. The protein is Enolase of Burkholderia thailandensis (strain ATCC 700388 / DSM 13276 / CCUG 48851 / CIP 106301 / E264).